A 380-amino-acid chain; its full sequence is Glucose-1-phosphate adenylyltransferase (380 aa).

Residues Tyr-99, Gly-164, 179–180 (EK), and Ser-190 contribute to the alpha-D-glucose 1-phosphate site.

Belongs to the bacterial/plant glucose-1-phosphate adenylyltransferase family. Homotetramer.

The catalysed reaction is alpha-D-glucose 1-phosphate + ATP + H(+) = ADP-alpha-D-glucose + diphosphate. It participates in glycan biosynthesis; glycogen biosynthesis. Functionally, involved in the biosynthesis of ADP-glucose, a building block required for the elongation reactions to produce glycogen. Catalyzes the reaction between ATP and alpha-D-glucose 1-phosphate (G1P) to produce pyrophosphate and ADP-Glc. The protein is Glucose-1-phosphate adenylyltransferase of Bacillus subtilis (strain 168).